The following is a 312-amino-acid chain: Peroxidase (312 aa).

The signal sequence occupies residues 1 to 23; sequence MAMGSASCISLVVLVALATAASG. Q24 bears the Pyrrolidone carboxylic acid mark. Cystine bridges form between C34–C107, C67–C70, C113–C307, and C192–C218. H65 acts as the Proton acceptor in catalysis. Ca(2+) is bound by residues D66, G69, D71, and S73. P155 serves as a coordination point for substrate. A heme b-binding site is contributed by H185. T186 provides a ligand contact to Ca(2+). 3 residues coordinate Ca(2+): D231, T234, and D239. An N-linked (GlcNAc...) asparagine glycan is attached at N262.

It belongs to the peroxidase family. Classical plant (class III) peroxidase subfamily. Requires Ca(2+) as cofactor. Heme b serves as cofactor. As to expression, root.

Its subcellular location is the secreted. It catalyses the reaction 2 a phenolic donor + H2O2 = 2 a phenolic radical donor + 2 H2O. In terms of biological role, removal of H(2)O(2), oxidation of toxic reductants, biosynthesis and degradation of lignin, suberization, auxin catabolism, response to environmental stresses such as wounding, pathogen attack and oxidative stress. These functions might be dependent on each isozyme/isoform in each plant tissue. Its function is as follows. Involved in defense response to powdery meldew fungus. The protein is Peroxidase of Triticum aestivum (Wheat).